Here is a 456-residue protein sequence, read N- to C-terminus: Bifunctional protein GlmU (456 aa).

Residues 1 to 229 are pyrophosphorylase; it reads MSSHAMSVVI…LSEVEGVNNR (229 aa). Residues 11–14, Lys25, Gln76, 81–82, 103–105, Gly140, Glu154, Asn169, and Asn227 contribute to the UDP-N-acetyl-alpha-D-glucosamine site; these read LAAG, GT, and YGD. Asp105 contributes to the Mg(2+) binding site. Asn227 is a binding site for Mg(2+). A linker region spans residues 230–250; the sequence is LQLARLEHVYQAEQAEKLLLA. The tract at residues 251-456 is N-acetyltransferase; the sequence is GVMLRDPARF…QGWRRPVKKK (206 aa). Residues Arg333 and Lys351 each contribute to the UDP-N-acetyl-alpha-D-glucosamine site. His363 serves as the catalytic Proton acceptor. Residues Tyr366 and Asn377 each contribute to the UDP-N-acetyl-alpha-D-glucosamine site. Acetyl-CoA is bound by residues Ala380, 386–387, Ser405, Ala423, and Arg440; that span reads NY.

This sequence in the N-terminal section; belongs to the N-acetylglucosamine-1-phosphate uridyltransferase family. The protein in the C-terminal section; belongs to the transferase hexapeptide repeat family. Homotrimer. The cofactor is Mg(2+).

It localises to the cytoplasm. It carries out the reaction alpha-D-glucosamine 1-phosphate + acetyl-CoA = N-acetyl-alpha-D-glucosamine 1-phosphate + CoA + H(+). The enzyme catalyses N-acetyl-alpha-D-glucosamine 1-phosphate + UTP + H(+) = UDP-N-acetyl-alpha-D-glucosamine + diphosphate. It participates in nucleotide-sugar biosynthesis; UDP-N-acetyl-alpha-D-glucosamine biosynthesis; N-acetyl-alpha-D-glucosamine 1-phosphate from alpha-D-glucosamine 6-phosphate (route II): step 2/2. It functions in the pathway nucleotide-sugar biosynthesis; UDP-N-acetyl-alpha-D-glucosamine biosynthesis; UDP-N-acetyl-alpha-D-glucosamine from N-acetyl-alpha-D-glucosamine 1-phosphate: step 1/1. Its pathway is bacterial outer membrane biogenesis; LPS lipid A biosynthesis. Catalyzes the last two sequential reactions in the de novo biosynthetic pathway for UDP-N-acetylglucosamine (UDP-GlcNAc). The C-terminal domain catalyzes the transfer of acetyl group from acetyl coenzyme A to glucosamine-1-phosphate (GlcN-1-P) to produce N-acetylglucosamine-1-phosphate (GlcNAc-1-P), which is converted into UDP-GlcNAc by the transfer of uridine 5-monophosphate (from uridine 5-triphosphate), a reaction catalyzed by the N-terminal domain. In Cronobacter sakazakii (strain ATCC BAA-894) (Enterobacter sakazakii), this protein is Bifunctional protein GlmU.